Reading from the N-terminus, the 290-residue chain is Lipoyl synthase (290 aa).

7 residues coordinate [4Fe-4S] cluster: cysteine 44, cysteine 49, cysteine 55, cysteine 70, cysteine 74, cysteine 77, and serine 281. The 215-residue stretch at 56-270 (WRCGTATFMI…KQIGLEKGFS (215 aa)) folds into the Radical SAM core domain.

The protein belongs to the radical SAM superfamily. Lipoyl synthase family. [4Fe-4S] cluster is required as a cofactor.

It localises to the cytoplasm. The enzyme catalyses [[Fe-S] cluster scaffold protein carrying a second [4Fe-4S](2+) cluster] + N(6)-octanoyl-L-lysyl-[protein] + 2 oxidized [2Fe-2S]-[ferredoxin] + 2 S-adenosyl-L-methionine + 4 H(+) = [[Fe-S] cluster scaffold protein] + N(6)-[(R)-dihydrolipoyl]-L-lysyl-[protein] + 4 Fe(3+) + 2 hydrogen sulfide + 2 5'-deoxyadenosine + 2 L-methionine + 2 reduced [2Fe-2S]-[ferredoxin]. It functions in the pathway protein modification; protein lipoylation via endogenous pathway; protein N(6)-(lipoyl)lysine from octanoyl-[acyl-carrier-protein]: step 2/2. Catalyzes the radical-mediated insertion of two sulfur atoms into the C-6 and C-8 positions of the octanoyl moiety bound to the lipoyl domains of lipoate-dependent enzymes, thereby converting the octanoylated domains into lipoylated derivatives. This Treponema denticola (strain ATCC 35405 / DSM 14222 / CIP 103919 / JCM 8153 / KCTC 15104) protein is Lipoyl synthase.